We begin with the raw amino-acid sequence, 487 residues long: Aspartyl/glutamyl-tRNA(Asn/Gln) amidotransferase subunit B (487 aa).

This sequence belongs to the GatB/GatE family. GatB subfamily. As to quaternary structure, heterotrimer of A, B and C subunits.

It catalyses the reaction L-glutamyl-tRNA(Gln) + L-glutamine + ATP + H2O = L-glutaminyl-tRNA(Gln) + L-glutamate + ADP + phosphate + H(+). It carries out the reaction L-aspartyl-tRNA(Asn) + L-glutamine + ATP + H2O = L-asparaginyl-tRNA(Asn) + L-glutamate + ADP + phosphate + 2 H(+). In terms of biological role, allows the formation of correctly charged Asn-tRNA(Asn) or Gln-tRNA(Gln) through the transamidation of misacylated Asp-tRNA(Asn) or Glu-tRNA(Gln) in organisms which lack either or both of asparaginyl-tRNA or glutaminyl-tRNA synthetases. The reaction takes place in the presence of glutamine and ATP through an activated phospho-Asp-tRNA(Asn) or phospho-Glu-tRNA(Gln). This is Aspartyl/glutamyl-tRNA(Asn/Gln) amidotransferase subunit B from Chlamydia caviae (strain ATCC VR-813 / DSM 19441 / 03DC25 / GPIC) (Chlamydophila caviae).